The sequence spans 131 residues: uncharacterized protein (131 aa).

3 consecutive transmembrane segments (helical) span residues 13–35, 60–79, and 100–119; these read RFIK…TFPI, LVAL…TYVC, and LFEI…WNIT.

It is found in the membrane. This is an uncharacterized protein from Saccharomyces cerevisiae (strain ATCC 204508 / S288c) (Baker's yeast).